The chain runs to 422 residues: Glucuronoxylanase XynC (422 aa).

Residues 1–32 (MIPRIKKTICVLLVCFTMLSVMLGPGATEVLA) form the signal peptide. Glu171 serves as the catalytic Proton donor. The Nucleophile role is filled by Glu260.

It belongs to the glycosyl hydrolase 30 family.

It is found in the secreted. It catalyses the reaction Endohydrolysis of (1-&gt;4)-beta-D-xylosyl links in some glucuronoarabinoxylans.. It participates in glycan degradation; xylan degradation. Catalyzes the depolymerization of methylglucuronoxylan (MeGAXn) from different sources. It cleaves the beta-1,4-xylosidic bond penultimate to that linking carbon one of the xylose residue substituted with alpha-1,2-linked 4-O-methyl-D-glucuronate (MeGA). This chain is Glucuronoxylanase XynC (xynC), found in Bacillus subtilis (strain 168).